A 650-amino-acid polypeptide reads, in one-letter code: Probable LIM domain-containing serine/threonine-protein kinase DDB_G0287001 (650 aa).

LIM zinc-binding domains lie at 4 to 63 and 64 to 122; these read NNCG…KLNA and RKCF…PSDK. Disordered stretches follow at residues 118 to 138, 171 to 197, and 293 to 320; these read KPSD…LPGK, LSSS…SSFM, and LLNS…NLNT. Over residues 173-188 the composition is skewed to gly residues; that stretch reads SSGGSGNSISGSGGTN. The Protein kinase domain maps to 386 to 643; sequence VAFGDVIASG…DTLKKISESL (258 aa). ATP contacts are provided by residues 392–400 and Lys413; that span reads IASGASGKV. Residue Asp509 is the Proton acceptor of the active site.

The protein belongs to the protein kinase superfamily. TKL Ser/Thr protein kinase family.

It catalyses the reaction L-seryl-[protein] + ATP = O-phospho-L-seryl-[protein] + ADP + H(+). The catalysed reaction is L-threonyl-[protein] + ATP = O-phospho-L-threonyl-[protein] + ADP + H(+). The protein is Probable LIM domain-containing serine/threonine-protein kinase DDB_G0287001 of Dictyostelium discoideum (Social amoeba).